Reading from the N-terminus, the 2564-residue chain is Spectrin beta chain, non-erythrocytic 4 (2564 aa).

A disordered region spans residues 1 to 37; sequence MAQVPGEVDNMEGLPAPNNNPAARWESPDRGWEREQP. An actin-binding region spans residues 1–282; sequence MAQVPGEVDN…IITYVVSFYH (282 aa). Over residues 26–36 the composition is skewed to basic and acidic residues; the sequence is ESPDRGWEREQ. 2 Calponin-homology (CH) domains span residues 61–165 and 180–285; these read AVQK…LRFQ and RSAK…HYFS. Spectrin repeat units follow at residues 311 to 418, 430 to 533, 536 to 641, 774 to 879, 884 to 982, 1089 to 1196, 1306 to 1407, 1412 to 1512, 1515 to 1617, 1623 to 1725, 1728 to 1830, 1835 to 1935, 1944 to 2046, and 2049 to 2123; these read IERY…AALR, LAQR…RLEQ, ALQK…AELE, ALHQ…WLRD, YRMF…RKEE, RLQR…EALV, ELQH…RQLF, ADQL…RLLL, KELH…QQVL, VEQY…ALEQ, WLYQ…AQLL, ELHK…EDAR, ALRF…WLQQ, and EVHQ…QSKQ. A disordered region spans residues 1853–1872; that stretch reads KRRRLPRLTTPPEPRPSASS. The span at 2208–2225 shows a compositional bias: low complexity; sequence PAAPEDAAETPATPAAAE. Disordered stretches follow at residues 2208–2439 and 2533–2564; these read PAAP…KSSN and ARWG…GRRK. Basic and acidic residues-rich tracts occupy residues 2227 to 2254, 2268 to 2278, and 2287 to 2318; these read VRPR…RQES, ERQESAEHEAA, and EQME…DLVK. Residues 2343-2355 show a composition bias toward pro residues; the sequence is PSLPQPRELPPGR. Composition is skewed to basic and acidic residues over residues 2362–2377 and 2424–2435; these read LPER…ARDR and FLLRKRELDANR. The PH domain occupies 2418 to 2527; the sequence is TVQHEGFLLR…WLEAVASSVA (110 aa). The segment covering 2538–2547 has biased composition (polar residues); the sequence is TLPTTSSTDE. Residues 2548-2564 are compositionally biased toward basic and acidic residues; the sequence is GNPKREGGDRRASGRRK.

This sequence belongs to the spectrin family. Expressed in skeletal muscle at the sarcolemma and in the muscle capillaries (at protein level). Abundantly expressed in brain and pancreatic islets.

Its subcellular location is the cytoplasm. The protein resides in the cytoskeleton. It localises to the cell cortex. The chain is Spectrin beta chain, non-erythrocytic 4 (SPTBN4) from Homo sapiens (Human).